A 345-amino-acid chain; its full sequence is Nicotinate-nucleotide--dimethylbenzimidazole phosphoribosyltransferase (345 aa).

The Proton acceptor role is filled by glutamate 312.

The protein belongs to the CobT family.

The catalysed reaction is 5,6-dimethylbenzimidazole + nicotinate beta-D-ribonucleotide = alpha-ribazole 5'-phosphate + nicotinate + H(+). Its pathway is nucleoside biosynthesis; alpha-ribazole biosynthesis; alpha-ribazole from 5,6-dimethylbenzimidazole: step 1/2. Its function is as follows. Catalyzes the synthesis of alpha-ribazole-5'-phosphate from nicotinate mononucleotide (NAMN) and 5,6-dimethylbenzimidazole (DMB). This is Nicotinate-nucleotide--dimethylbenzimidazole phosphoribosyltransferase from Bacteroides fragilis (strain ATCC 25285 / DSM 2151 / CCUG 4856 / JCM 11019 / LMG 10263 / NCTC 9343 / Onslow / VPI 2553 / EN-2).